A 128-amino-acid polypeptide reads, in one-letter code: 3-aminoacrylate deaminase RutC (128 aa).

This sequence belongs to the RutC family. Homotrimer.

The enzyme catalyses (Z)-3-aminoacrylate + H2O + H(+) = 3-oxopropanoate + NH4(+). Its function is as follows. Involved in pyrimidine catabolism. Catalyzes the deamination of 3-aminoacrylate to malonic semialdehyde, a reaction that can also occur spontaneously. RutC may facilitate the reaction and modulate the metabolic fitness, rather than catalyzing essential functions. The polypeptide is 3-aminoacrylate deaminase RutC (Shigella flexneri serotype X (strain 2002017)).